Reading from the N-terminus, the 336-residue chain is tRNA-dihydrouridine(20/20a) synthase (336 aa).

FMN contacts are provided by residues 24–26 (PMM) and Gln-77. Cys-107 acts as the Proton donor in catalysis. FMN-binding positions include Lys-146, His-178, 218-220 (NGG), and 240-241 (GR).

This sequence belongs to the Dus family. DusA subfamily. FMN serves as cofactor.

It catalyses the reaction 5,6-dihydrouridine(20) in tRNA + NADP(+) = uridine(20) in tRNA + NADPH + H(+). It carries out the reaction 5,6-dihydrouridine(20) in tRNA + NAD(+) = uridine(20) in tRNA + NADH + H(+). The catalysed reaction is 5,6-dihydrouridine(20a) in tRNA + NADP(+) = uridine(20a) in tRNA + NADPH + H(+). The enzyme catalyses 5,6-dihydrouridine(20a) in tRNA + NAD(+) = uridine(20a) in tRNA + NADH + H(+). In terms of biological role, catalyzes the synthesis of 5,6-dihydrouridine (D), a modified base found in the D-loop of most tRNAs, via the reduction of the C5-C6 double bond in target uridines. Specifically modifies U20 and U20a in tRNAs. This chain is tRNA-dihydrouridine(20/20a) synthase, found in Pseudomonas putida (strain ATCC 47054 / DSM 6125 / CFBP 8728 / NCIMB 11950 / KT2440).